Consider the following 106-residue polypeptide: Toxin-like structure LSTX-D4 (106 aa).

A signal peptide spans M1 to S20. A propeptide spanning residues E21–R41 is cleaved from the precursor. Disulfide bonds link C45/C60, C52/C69, C59/C85, and C71/C83.

It belongs to the neurotoxin 19 (CSTX) family. 02 (D7) subfamily. In terms of tissue distribution, expressed by the venom gland.

It is found in the secreted. The polypeptide is Toxin-like structure LSTX-D4 (Lycosa singoriensis (Wolf spider)).